Here is a 375-residue protein sequence, read N- to C-terminus: Phosphate acyltransferase (375 aa).

The interval 354-375 (AQDDATSADADAPGDSETGSTN) is disordered. Residues 356 to 368 (DDATSADADAPGD) are compositionally biased toward low complexity.

This sequence belongs to the PlsX family. In terms of assembly, homodimer. Probably interacts with PlsY.

Its subcellular location is the cytoplasm. The catalysed reaction is a fatty acyl-[ACP] + phosphate = an acyl phosphate + holo-[ACP]. It functions in the pathway lipid metabolism; phospholipid metabolism. Catalyzes the reversible formation of acyl-phosphate (acyl-PO(4)) from acyl-[acyl-carrier-protein] (acyl-ACP). This enzyme utilizes acyl-ACP as fatty acyl donor, but not acyl-CoA. This Ruegeria sp. (strain TM1040) (Silicibacter sp.) protein is Phosphate acyltransferase.